We begin with the raw amino-acid sequence, 118 residues long: Large ribosomal subunit protein bL19 (118 aa).

It belongs to the bacterial ribosomal protein bL19 family.

Functionally, this protein is located at the 30S-50S ribosomal subunit interface and may play a role in the structure and function of the aminoacyl-tRNA binding site. The protein is Large ribosomal subunit protein bL19 (rplS) of Serratia marcescens.